Consider the following 561-residue polypeptide: Dihydroxy-acid dehydratase (561 aa).

Cys50 serves as a coordination point for [2Fe-2S] cluster. Asp82 is a binding site for Mg(2+). A [2Fe-2S] cluster-binding site is contributed by Cys123. Residues Asp124 and Lys125 each contribute to the Mg(2+) site. The residue at position 125 (Lys125) is an N6-carboxylysine. Residue Cys195 coordinates [2Fe-2S] cluster. Glu447 contributes to the Mg(2+) binding site. Ser473 acts as the Proton acceptor in catalysis.

Belongs to the IlvD/Edd family. As to quaternary structure, homodimer. [2Fe-2S] cluster is required as a cofactor. Mg(2+) serves as cofactor.

The catalysed reaction is (2R)-2,3-dihydroxy-3-methylbutanoate = 3-methyl-2-oxobutanoate + H2O. It carries out the reaction (2R,3R)-2,3-dihydroxy-3-methylpentanoate = (S)-3-methyl-2-oxopentanoate + H2O. It participates in amino-acid biosynthesis; L-isoleucine biosynthesis; L-isoleucine from 2-oxobutanoate: step 3/4. The protein operates within amino-acid biosynthesis; L-valine biosynthesis; L-valine from pyruvate: step 3/4. In terms of biological role, functions in the biosynthesis of branched-chain amino acids. Catalyzes the dehydration of (2R,3R)-2,3-dihydroxy-3-methylpentanoate (2,3-dihydroxy-3-methylvalerate) into 2-oxo-3-methylpentanoate (2-oxo-3-methylvalerate) and of (2R)-2,3-dihydroxy-3-methylbutanoate (2,3-dihydroxyisovalerate) into 2-oxo-3-methylbutanoate (2-oxoisovalerate), the penultimate precursor to L-isoleucine and L-valine, respectively. In Rippkaea orientalis (strain PCC 8801 / RF-1) (Cyanothece sp. (strain PCC 8801)), this protein is Dihydroxy-acid dehydratase.